We begin with the raw amino-acid sequence, 159 residues long: Type IV major alpha-pilin (159 aa).

Residues 1 to 6 (MNAQKG) constitute a propeptide, leader sequence. Residue F7 is modified to N-methylphenylalanine. The chain crosses the membrane as a helical span at residues 7–27 (FTLIELMIVIAIIGILAAIAL). The interval 64 to 87 (VLSEESSTSKENIGLTSSETSTKP) is disordered. Polar residues predominate over residues 67-87 (EESSTSKENIGLTSSETSTKP). A disulfide bridge connects residues C137 and C156.

The protein belongs to the N-Me-Phe pilin family. In terms of assembly, major component of the type IV pilus (T4P) that plays a role in surface and attachment to the host epithelial tissues.

The protein localises to the fimbrium. The protein resides in the membrane. This chain is Type IV major alpha-pilin (tfpI), found in Moraxella bovis.